Here is a 199-residue protein sequence, read N- to C-terminus: Adenylyl-sulfate kinase (199 aa).

35 to 42 serves as a coordination point for ATP; the sequence is GLSGSGKS. Ser109 functions as the Phosphoserine intermediate in the catalytic mechanism.

The protein belongs to the APS kinase family.

The enzyme catalyses adenosine 5'-phosphosulfate + ATP = 3'-phosphoadenylyl sulfate + ADP + H(+). It participates in sulfur metabolism; hydrogen sulfide biosynthesis; sulfite from sulfate: step 2/3. Functionally, catalyzes the synthesis of activated sulfate. The polypeptide is Adenylyl-sulfate kinase (Clostridium kluyveri (strain ATCC 8527 / DSM 555 / NBRC 12016 / NCIMB 10680 / K1)).